We begin with the raw amino-acid sequence, 309 residues long: Serine/threonine-protein phosphatase 2A catalytic subunit alpha isoform (309 aa).

The Mn(2+) site is built by Asp57, His59, Asp85, and Asn117. Asp57, His59, and Asp85 together coordinate Zn(2+). Residues Asp85 and Asn117 each coordinate Fe(3+). The active-site Proton donor is the His118. Residues His167 and His241 each coordinate Mn(2+). Positions 167 and 241 each coordinate Fe(3+). Position 307 is a phosphotyrosine (Tyr307). At Leu309 the chain carries Leucine methyl ester.

It belongs to the PPP phosphatase family. PP-1 subfamily. In terms of assembly, PP2A consists of a common heterodimeric core enzyme, composed of PPP2CA, a 36 kDa catalytic subunit (subunit C), and PPP2R1A, a 65 kDa constant regulatory subunit (PR65 or subunit A), that associates with a variety of regulatory subunits. Proteins that associate with the core dimer include three families of regulatory subunits B (the R2/B/PR55/B55, R3/B''/PR72/PR130/PR59 and R5/B'/B56 families), the 48 kDa variable regulatory subunit, viral proteins, and cell signaling molecules. May indirectly interact with SGOL1, most probably through regulatory B56 subunits. Phosphatase component of the Integrator-PP2A (INTAC) complex, composed of the Integrator core complex and protein phosphatase 2A subunits PPP2CA and PPP2R1A. Mn(2+) is required as a cofactor. The cofactor is Fe(3+). Requires Zn(2+) as cofactor. In terms of processing, reversibly methyl esterified on Leu-309 by leucine carboxyl methyltransferase 1 (LCMT1) and protein phosphatase methylesterase 1 (PPME1). Carboxyl methylation influences the affinity of the catalytic subunit for the different regulatory subunits, thereby modulating the PP2A holoenzyme's substrate specificity, enzyme activity and cellular localization. Post-translationally, phosphorylation of either threonine (by autophosphorylation-activated protein kinase) or tyrosine results in inactivation of the phosphatase. Auto-dephosphorylation has been suggested as a mechanism for reactivation.

It is found in the cytoplasm. It localises to the nucleus. The protein localises to the chromosome. Its subcellular location is the centromere. The protein resides in the cytoskeleton. It is found in the spindle pole. The catalysed reaction is O-phospho-L-seryl-[protein] + H2O = L-seryl-[protein] + phosphate. The enzyme catalyses O-phospho-L-threonyl-[protein] + H2O = L-threonyl-[protein] + phosphate. Inhibited by the interaction between PPP2R2A and ARPP19; this inhibition is enhanced when ARPP19 is phosphorylated. Inhibited by the interaction between PPP2R2A and PABIR1/FAM122A. In terms of biological role, PP2A is the major phosphatase for microtubule-associated proteins (MAPs). PP2A can modulate the activity of phosphorylase B kinase casein kinase 2, mitogen-stimulated S6 kinase, and MAP-2 kinase. Key mediator of a quality checkpoint during transcription elongation as part of the Integrator-PP2A (INTAC) complex. The INTAC complex drives premature transcription termination of transcripts that are unfavorably configured for transcriptional elongation: within the INTAC complex, PPP2CA catalyzes dephosphorylation of the C-terminal domain (CTD) of Pol II subunit POLR2A/RPB1 and SUPT5H/SPT5, thereby preventing transcriptional elongation. This Gallus gallus (Chicken) protein is Serine/threonine-protein phosphatase 2A catalytic subunit alpha isoform (PPP2CA).